The chain runs to 321 residues: Thylakoid-associated protein sll1697 (321 aa).

It is found in the cellular thylakoid membrane. The protein is Thylakoid-associated protein sll1697 of Synechocystis sp. (strain ATCC 27184 / PCC 6803 / Kazusa).